The chain runs to 420 residues: Gamma-glutamyl phosphate reductase (420 aa).

This sequence belongs to the gamma-glutamyl phosphate reductase family.

It is found in the cytoplasm. It carries out the reaction L-glutamate 5-semialdehyde + phosphate + NADP(+) = L-glutamyl 5-phosphate + NADPH + H(+). The protein operates within amino-acid biosynthesis; L-proline biosynthesis; L-glutamate 5-semialdehyde from L-glutamate: step 2/2. Catalyzes the NADPH-dependent reduction of L-glutamate 5-phosphate into L-glutamate 5-semialdehyde and phosphate. The product spontaneously undergoes cyclization to form 1-pyrroline-5-carboxylate. This is Gamma-glutamyl phosphate reductase from Oenococcus oeni (strain ATCC BAA-331 / PSU-1).